Here is a 206-residue protein sequence, read N- to C-terminus: Small ribosomal subunit protein uS4 (206 aa).

The 63-residue stretch at Ser96–Ala158 folds into the S4 RNA-binding domain.

Belongs to the universal ribosomal protein uS4 family. In terms of assembly, part of the 30S ribosomal subunit. Contacts protein S5. The interaction surface between S4 and S5 is involved in control of translational fidelity.

Its function is as follows. One of the primary rRNA binding proteins, it binds directly to 16S rRNA where it nucleates assembly of the body of the 30S subunit. In terms of biological role, with S5 and S12 plays an important role in translational accuracy. The sequence is that of Small ribosomal subunit protein uS4 from Francisella tularensis subsp. holarctica (strain OSU18).